A 228-amino-acid chain; its full sequence is Ribose-5-phosphate isomerase A (228 aa).

Residues Thr27 to Thr30, Asp86 to Asp89, and Lys100 to Gly103 each bind substrate. Glu109 (proton acceptor) is an active-site residue. Lys127 is a substrate binding site.

Belongs to the ribose 5-phosphate isomerase family. Homodimer.

It catalyses the reaction aldehydo-D-ribose 5-phosphate = D-ribulose 5-phosphate. Its pathway is carbohydrate degradation; pentose phosphate pathway; D-ribose 5-phosphate from D-ribulose 5-phosphate (non-oxidative stage): step 1/1. Catalyzes the reversible conversion of ribose-5-phosphate to ribulose 5-phosphate. The protein is Ribose-5-phosphate isomerase A of Borreliella afzelii (strain PKo) (Borrelia afzelii).